A 138-amino-acid polypeptide reads, in one-letter code: PTS system sorbose-specific EIIA component (138 aa).

Positions 1-125 (MEIILVGHAH…KIKEEFSTSL (125 aa)) constitute a PTS EIIA type-4 domain. The active-site Tele-phosphohistidine intermediate is the His8. His8 is modified (phosphohistidine; by HPr).

The protein resides in the cytoplasm. Its function is as follows. The phosphoenolpyruvate-dependent sugar phosphotransferase system (PTS), a major carbohydrate active transport system, catalyzes the phosphorylation of incoming sugar substrates concomitant with their translocation across the cell membrane. The enzyme II SorABCD PTS system is involved in L-sorbose transport. In Lacticaseibacillus casei (Lactobacillus casei), this protein is PTS system sorbose-specific EIIA component.